Here is a 475-residue protein sequence, read N- to C-terminus: Ribulose bisphosphate carboxylase large chain (475 aa).

The propeptide occupies 1 to 2 (MS). Proline 3 is subject to N-acetylproline. Lysine 14 is modified (N6,N6,N6-trimethyllysine). 2 residues coordinate substrate: asparagine 123 and threonine 173. The active-site Proton acceptor is the lysine 175. Lysine 177 lines the substrate pocket. Residues lysine 201, aspartate 203, and glutamate 204 each contribute to the Mg(2+) site. Lysine 201 is subject to N6-carboxylysine. Histidine 294 (proton acceptor) is an active-site residue. Substrate-binding residues include arginine 295, histidine 327, and serine 379.

This sequence belongs to the RuBisCO large chain family. Type I subfamily. In terms of assembly, heterohexadecamer of 8 large chains and 8 small chains; disulfide-linked. The disulfide link is formed within the large subunit homodimers. Mg(2+) is required as a cofactor. In terms of processing, the disulfide bond which can form in the large chain dimeric partners within the hexadecamer appears to be associated with oxidative stress and protein turnover.

It localises to the plastid. The protein resides in the chloroplast. The enzyme catalyses 2 (2R)-3-phosphoglycerate + 2 H(+) = D-ribulose 1,5-bisphosphate + CO2 + H2O. It catalyses the reaction D-ribulose 1,5-bisphosphate + O2 = 2-phosphoglycolate + (2R)-3-phosphoglycerate + 2 H(+). RuBisCO catalyzes two reactions: the carboxylation of D-ribulose 1,5-bisphosphate, the primary event in carbon dioxide fixation, as well as the oxidative fragmentation of the pentose substrate in the photorespiration process. Both reactions occur simultaneously and in competition at the same active site. The chain is Ribulose bisphosphate carboxylase large chain from Stellaria media (Common chickweed).